The sequence spans 295 residues: Acetylglutamate kinase (295 aa).

Residues 61–62 (GG), arginine 83, and asparagine 187 each bind substrate.

The protein belongs to the acetylglutamate kinase family. ArgB subfamily.

It is found in the cytoplasm. The enzyme catalyses N-acetyl-L-glutamate + ATP = N-acetyl-L-glutamyl 5-phosphate + ADP. It functions in the pathway amino-acid biosynthesis; L-arginine biosynthesis; N(2)-acetyl-L-ornithine from L-glutamate: step 2/4. Its function is as follows. Catalyzes the ATP-dependent phosphorylation of N-acetyl-L-glutamate. In Methanocorpusculum labreanum (strain ATCC 43576 / DSM 4855 / Z), this protein is Acetylglutamate kinase.